Consider the following 195-residue polypeptide: Probable GTP-binding protein EngB (195 aa).

The 174-residue stretch at 22–195 (GLPEIALAGR…WGAIKKMISR (174 aa)) folds into the EngB-type G domain. GTP contacts are provided by residues 30–37 (GRSNVGKS), 57–61 (GKTQT), 75–78 (DVPG), 142–145 (TKAD), and 174–176 (FSS). Positions 37 and 59 each coordinate Mg(2+).

This sequence belongs to the TRAFAC class TrmE-Era-EngA-EngB-Septin-like GTPase superfamily. EngB GTPase family. The cofactor is Mg(2+).

In terms of biological role, necessary for normal cell division and for the maintenance of normal septation. This is Probable GTP-binding protein EngB from Bacillus velezensis (strain DSM 23117 / BGSC 10A6 / LMG 26770 / FZB42) (Bacillus amyloliquefaciens subsp. plantarum).